A 428-amino-acid chain; its full sequence is UPF0229 protein YeaH (428 aa).

The segment covering 78–90 has biased composition (basic and acidic residues); the sequence is GNDHFIQNDRIER. Residues 78–111 are disordered; it reads GNDHFIQNDRIERPQGGGGGGSGSGQGQASQDGE. The span at 92–103 shows a compositional bias: gly residues; the sequence is QGGGGGGSGSGQ.

The protein belongs to the UPF0229 family.

The protein is UPF0229 protein YeaH of Salmonella enteritidis PT4 (strain P125109).